The following is a 608-amino-acid chain: tRNA (guanine(37)-N(1))-methyltransferase 1 (608 aa).

The tract at residues 207–229 (SRPKKKKRRKEEERSEGKKRTGK) is disordered. Over residues 216–229 (KEEERSEGKKRTGK) the composition is skewed to basic and acidic residues. S-adenosyl-L-methionine is bound by residues R425, 463–464 (DL), 491–492 (DG), and N514.

It belongs to the class I-like SAM-binding methyltransferase superfamily. TRM5/TYW2 family. As to quaternary structure, monomer.

The protein resides in the mitochondrion matrix. It is found in the nucleus. It localises to the cytoplasm. The catalysed reaction is guanosine(37) in tRNA + S-adenosyl-L-methionine = N(1)-methylguanosine(37) in tRNA + S-adenosyl-L-homocysteine + H(+). In terms of biological role, specifically methylates the N1 position of guanosine-37 in various cytoplasmic and mitochondrial tRNAs. Methylation is not dependent on the nature of the nucleoside 5' of the target nucleoside. This is the first step in the biosynthesis of wybutosine (yW), a modified base adjacent to the anticodon of tRNAs and required for accurate decoding. This is tRNA (guanine(37)-N(1))-methyltransferase 1 from Vitis vinifera (Grape).